The following is a 121-amino-acid chain: Alpha-lactalbumin (121 aa).

The 121-residue stretch at 1-121 (IDYRKCQASQ…CLEDLDQWRC (121 aa)) folds into the C-type lysozyme domain. Intrachain disulfides connect Cys6/Cys121, Cys28/Cys112, Cys61/Cys77, and Cys73/Cys91. A glycan (N-linked (GlcNAc...) asparagine) is linked at Asn44. Ca(2+) is bound by residues Lys79, Asp82, Asp84, Asp87, and Asp88.

It belongs to the glycosyl hydrolase 22 family. In terms of assembly, lactose synthase (LS) is a heterodimer of a catalytic component, beta1,4-galactosyltransferase (beta4Gal-T1) and a regulatory component, alpha-lactalbumin (LA). In terms of tissue distribution, mammary gland specific. Secreted in milk.

The protein localises to the secreted. In terms of biological role, regulatory subunit of lactose synthase, changes the substrate specificity of galactosyltransferase in the mammary gland making glucose a good acceptor substrate for this enzyme. This enables LS to synthesize lactose, the major carbohydrate component of milk. In other tissues, galactosyltransferase transfers galactose onto the N-acetylglucosamine of the oligosaccharide chains in glycoproteins. This chain is Alpha-lactalbumin (LALBA), found in Notamacropus rufogriseus (Red-necked wallaby).